The following is a 146-amino-acid chain: Putative pre-16S rRNA nuclease (146 aa).

It belongs to the YqgF nuclease family.

The protein localises to the cytoplasm. Its function is as follows. Could be a nuclease involved in processing of the 5'-end of pre-16S rRNA. The polypeptide is Putative pre-16S rRNA nuclease (Paraburkholderia xenovorans (strain LB400)).